The primary structure comprises 237 residues: LexA repressor (237 aa).

A DNA-binding region (H-T-H motif) is located at residues 26–46 (FDEMKDALGLKSKSGIHRLIT). Catalysis depends on for autocatalytic cleavage activity residues S158 and K196.

The protein belongs to the peptidase S24 family. In terms of assembly, homodimer.

It catalyses the reaction Hydrolysis of Ala-|-Gly bond in repressor LexA.. Functionally, represses a number of genes involved in the response to DNA damage (SOS response), including recA and lexA. In the presence of single-stranded DNA, RecA interacts with LexA causing an autocatalytic cleavage which disrupts the DNA-binding part of LexA, leading to derepression of the SOS regulon and eventually DNA repair. The polypeptide is LexA repressor (Rhodospirillum centenum (strain ATCC 51521 / SW)).